The following is a 409-amino-acid chain: Arginine deiminase (409 aa).

C399 functions as the Amidino-cysteine intermediate in the catalytic mechanism.

Belongs to the arginine deiminase family.

It localises to the cytoplasm. It carries out the reaction L-arginine + H2O = L-citrulline + NH4(+). It participates in amino-acid degradation; L-arginine degradation via ADI pathway; carbamoyl phosphate from L-arginine: step 1/2. This chain is Arginine deiminase, found in Borreliella afzelii (strain PKo) (Borrelia afzelii).